Consider the following 878-residue polypeptide: Pyruvate, phosphate dikinase (878 aa).

Positions 1–347 are N-terminal; that stretch reads MKKLIYYFGS…LYILQTRTAK (347 aa). R96 lines the ATP pocket. Residues 348-404 are linker 1; sequence RTAIAAINIAVQMVEEKLISKEQALMRIDPESLNQLLHTRIDYSKGLTSIAEGLPAS. The central stretch occupies residues 405 to 502; that stretch reads PGAATGIAVF…VIKQGDIITI (98 aa). T457 is subject to Phosphothreonine; by PDRP1. Residue H459 is the Tele-phosphohistidine intermediate of the active site. The tract at residues 503 to 537 is linker 2; it reads DGGSGKIFLGEMPLIQPTFSEESKLILDWADEISS. Positions 538–878 are C-terminal; that stretch reads LKVRANAETV…ASAQAKIKHG (341 aa). 7 residues coordinate substrate: R565, R621, E749, G770, T771, N772, and D773. E749 provides a ligand contact to Mg(2+). D773 provides a ligand contact to Mg(2+). Residue C835 is the Proton donor of the active site.

It belongs to the PEP-utilizing enzyme family. In terms of assembly, homodimer. Mg(2+) serves as cofactor. Phosphorylation of Thr-457 in the dark inactivates the enzyme. Dephosphorylation upon light stimulation reactivates the enzyme.

It carries out the reaction pyruvate + phosphate + ATP = phosphoenolpyruvate + AMP + diphosphate + H(+). With respect to regulation, activated by light-induced dephosphorylation. Inhibited by dark-induced phosphorylation. Both reactions are catalyzed by PDRP1. Functionally, catalyzes the reversible phosphorylation of pyruvate and phosphate. The polypeptide is Pyruvate, phosphate dikinase (ppdK) (Rickettsia felis (strain ATCC VR-1525 / URRWXCal2) (Rickettsia azadi)).